A 409-amino-acid chain; its full sequence is NADH-quinone oxidoreductase subunit 4 (409 aa).

Belongs to the complex I 49 kDa subunit family. In terms of assembly, NDH-1 is composed of 15 different subunits, Nqo1 to Nqo15. The complex has a L-shaped structure, with the hydrophobic arm (subunits Nqo7, Nqo8 and Nqo10 to Nqo14) embedded in the membrane and the hydrophilic peripheral arm (subunits Nqo1 to Nqo6, Nqo9 and Nqo15) protruding into the bacterial cytoplasm. The hydrophilic domain contains all the redox centers. This subunit interacts extensively with Nqo6.

Its subcellular location is the cell membrane. It carries out the reaction a quinone + NADH + 5 H(+)(in) = a quinol + NAD(+) + 4 H(+)(out). NDH-1 shuttles electrons from NADH, via FMN and iron-sulfur (Fe-S) centers, to quinones in the respiratory chain. The immediate electron acceptor for the enzyme in this species is menaquinone. Couples the redox reaction to proton translocation (for every two electrons transferred, four hydrogen ions are translocated across the cytoplasmic membrane), and thus conserves the redox energy in a proton gradient required for the synthesis of ATP. The Nqo4 subunit may contain the quinone-binding site. The polypeptide is NADH-quinone oxidoreductase subunit 4 (nqo4) (Thermus thermophilus (strain ATCC 27634 / DSM 579 / HB8)).